We begin with the raw amino-acid sequence, 796 residues long: Probable phosphoketolase 2 (796 aa).

It belongs to the XFP family. The cofactor is thiamine diphosphate.

The chain is Probable phosphoketolase 2 from Lactiplantibacillus plantarum (strain ATCC BAA-793 / NCIMB 8826 / WCFS1) (Lactobacillus plantarum).